Here is a 192-residue protein sequence, read N- to C-terminus: MSERVFAELATIHYQKSLPCRHSFDPPRTTPILHLYIIHLLLPPLIAIVCLCYIAIVPFEEEEERMRMQVVETAAVEEEEAAAAMMSVYERVARMASGNAVVVFSASGCCMCHVVKRLLLGLGVGPAVYELDQLAAAADIQAALSQLLPPGQPPVPVVFVGGRLLGGVEKVMACHINGTLVPLLKQAGALWL.

The Glutaredoxin domain occupies 89 to 191; sequence YERVARMASG…PLLKQAGALW (103 aa). Cys109 and Cys112 form a disulfide bridge. The Responsive for interaction with TGA factors signature appears at 189-192; it reads ALWL.

It belongs to the glutaredoxin family. CC-type subfamily.

Its subcellular location is the cytoplasm. The protein resides in the nucleus. In terms of biological role, has a glutathione-disulfide oxidoreductase activity in the presence of NADPH and glutathione reductase. Reduces low molecular weight disulfides and proteins. The chain is Glutaredoxin-C9 (GRXC9) from Oryza sativa subsp. japonica (Rice).